The following is a 390-amino-acid chain: 4-hydroxy-3-methylbut-2-en-1-yl diphosphate synthase (flavodoxin) (390 aa).

[4Fe-4S] cluster is bound by residues Cys281, Cys284, Cys316, and Glu323.

Belongs to the IspG family. [4Fe-4S] cluster serves as cofactor.

The enzyme catalyses (2E)-4-hydroxy-3-methylbut-2-enyl diphosphate + oxidized [flavodoxin] + H2O + 2 H(+) = 2-C-methyl-D-erythritol 2,4-cyclic diphosphate + reduced [flavodoxin]. Its pathway is isoprenoid biosynthesis; isopentenyl diphosphate biosynthesis via DXP pathway; isopentenyl diphosphate from 1-deoxy-D-xylulose 5-phosphate: step 5/6. Converts 2C-methyl-D-erythritol 2,4-cyclodiphosphate (ME-2,4cPP) into 1-hydroxy-2-methyl-2-(E)-butenyl 4-diphosphate. The sequence is that of 4-hydroxy-3-methylbut-2-en-1-yl diphosphate synthase (flavodoxin) from Salinispora tropica (strain ATCC BAA-916 / DSM 44818 / JCM 13857 / NBRC 105044 / CNB-440).